The sequence spans 232 residues: Homeobox protein SAX-1 (232 aa).

Disordered stretches follow at residues 1–64 (CLPD…SCAK), 122–150 (KQHP…RPAA), and 185–208 (LLGA…LCPS). Residues 65–124 (PRRARTAFTYEQLVALENKFRATRYLSVCERLNLALSLSLTETQVKIWFQNRRTKWKKQH) constitute a DNA-binding region (homeobox). Low complexity predominate over residues 126 to 142 (GADGAAAPAPPAAARCS).

This sequence belongs to the NK-1 homeobox family. Transiently expressed in the birth zone of the whole spinal cord regardless of the axial level.

Its subcellular location is the nucleus. The protein is Homeobox protein SAX-1 (SAX1) of Gallus gallus (Chicken).